Here is a 304-residue protein sequence, read N- to C-terminus: Uricase (304 aa).

Residue A2 is modified to N-acetylalanine. K10 and K23 each carry N6-acetyllysine; alternate. K10 and K23 each carry N6-succinyllysine; alternate. Catalysis depends on K23, which acts as the Charge relay system. N6-acetyllysine occurs at positions 27 and 36. 2 positions are modified to phosphoserine: S39 and S63. Residue T68 is the Charge relay system of the active site. The urate site is built by T68 and D69. K118, K122, and K164 each carry N6-acetyllysine. F170 provides a ligand contact to urate. An N6-acetyllysine mark is found at K175 and K185. R187 contributes to the urate binding site. An N6-acetyllysine; alternate mark is found at K221 and K228. K221 and K228 each carry N6-succinyllysine; alternate. At S232 the chain carries Phosphoserine. Urate contacts are provided by V235, Q236, and N262. The Charge relay system role is filled by H264. K278 is subject to N6-acetyllysine. Position 289 is a phosphotyrosine (Y289). Positions 302–304 (SRL) match the Microbody targeting signal motif.

The protein belongs to the uricase family. As to quaternary structure, homotetramer.

The protein localises to the peroxisome. The enzyme catalyses urate + O2 + H2O = 5-hydroxyisourate + H2O2. It participates in purine metabolism; urate degradation; (S)-allantoin from urate: step 1/3. Its function is as follows. Catalyzes the oxidation of uric acid to 5-hydroxyisourate, which is further processed to form (S)-allantoin. The polypeptide is Uricase (UOX) (Sus scrofa (Pig)).